The primary structure comprises 498 residues: Tyrosine 3-monooxygenase (498 aa).

A compositionally biased stretch (pro residues) spans methionine 1–glutamine 10. A disordered region spans residues methionine 1–serine 31. Serine 19 carries the post-translational modification Phosphoserine; by CaMK2. Serine 31 is subject to Phosphoserine. Serine 40 bears the Phosphoserine; by CaMK2 and PKA mark. Positions 331, 336, and 376 each coordinate Fe cation. Serine 472 is subject to Phosphoserine.

It belongs to the biopterin-dependent aromatic amino acid hydroxylase family. In terms of assembly, homotetramer. Interacts (when phosphorylated at Ser-19) with YWHAG; one YWHAG dimer binds to one TH tetramer and this interaction may influence the phosphorylation and dephosphorylation of other sites. Interacts with NT5DC2; the interaction results in reduced phosphorylation and decreased catalytic activity of TH. It depends on Fe(2+) as a cofactor. Phosphorylated on Ser-19, Ser-31 and Ser-40 by several protein kinases with different site specificities. Phosphorylation at Ser-31 and Ser-40 leads to an increase of TH activity. Phosphorylation at Ser-40 activates the enzyme and also counteracts the feedback inhibition of TH by catecholamines. Phosphorylation of Ser-19 and Ser-31 triggers the proteasomal degradation of TH through the ubiquitin-proteasome pathway. Phosphorylation at Ser-31 facilitates transport of TH from the soma to the nerve terminals via the microtubule network. Phosphorylation at Ser-19 induces the high-affinity binding to the 14-3-3 protein YWHAG; this interaction may influence the phosphorylation and dephosphorylation of other sites. Ser-19 increases the phosphorylation at Ser-40 in a hierarchical manner, leading to increased activity.

Its subcellular location is the cytoplasm. The protein resides in the perinuclear region. The protein localises to the nucleus. It localises to the cell projection. It is found in the axon. Its subcellular location is the cytoplasmic vesicle. The protein resides in the secretory vesicle. The protein localises to the synaptic vesicle. It catalyses the reaction (6R)-L-erythro-5,6,7,8-tetrahydrobiopterin + L-tyrosine + O2 = (4aS,6R)-4a-hydroxy-L-erythro-5,6,7,8-tetrahydrobiopterin + L-dopa. Its pathway is catecholamine biosynthesis; dopamine biosynthesis; dopamine from L-tyrosine: step 1/2. Inhibited in feedback fashion by the catecholamine neurotransmitters, especially by dopamine in competition with tetrahydrobiopterin. Phosphorylation of several Ser/Thr residues in the N-terminus regulates the catalytic activity. Ser-31 and Ser-40 are readily phosphorylated to activate the catalytic activity. A cysteine modification induced by N-ethylmaleimide (NEM), inhibits tyrosine 3-monooxygenase activity through the modification of the Cys-177. Catalyzes the conversion of L-tyrosine to L-dihydroxyphenylalanine (L-Dopa), the rate-limiting step in the biosynthesis of catecholamines, dopamine, noradrenaline, and adrenaline. Uses tetrahydrobiopterin and molecular oxygen to convert tyrosine to L-Dopa. In addition to tyrosine, is able to catalyze the hydroxylation of phenylalanine and tryptophan but with lower specificity. Positively regulates the regression of retinal hyaloid vessels during postnatal development. The protein is Tyrosine 3-monooxygenase (Th) of Rattus norvegicus (Rat).